A 145-amino-acid chain; its full sequence is Cell division protein SepF (145 aa).

A disordered region spans residues 21 to 41 (DKPQESTKAKEENVKPKHETP). Positions 23-41 (PQESTKAKEENVKPKHETP) are enriched in basic and acidic residues.

The protein belongs to the SepF family. As to quaternary structure, homodimer. Interacts with FtsZ.

The protein localises to the cytoplasm. Its function is as follows. Cell division protein that is part of the divisome complex and is recruited early to the Z-ring. Probably stimulates Z-ring formation, perhaps through the cross-linking of FtsZ protofilaments. Its function overlaps with FtsA. The protein is Cell division protein SepF of Caldicellulosiruptor saccharolyticus (strain ATCC 43494 / DSM 8903 / Tp8T 6331).